Reading from the N-terminus, the 579-residue chain is MDIFRVLTRGASIRKNGDSNRTQSADFSMANEKKSKTAGSSSTPARDEQQLTKELDFFRNKKIMNKVKSESTKGEGEDEVQEDNQEEDEDHADDETELSGKIITKQDALKLRKSYQGNVSGNSVPLPIGSFEDLITRFQFDKRLLNNLIENNFTEPTPIQSESIPILLHERDMIACAPTGSGKTLAFLIPLLQQIINDKTTVGLKGLIISPTKELANQIFIECSKLANKIYLDKKRPLQVALLSKSLSSKLKNKVISEDKYDIIISTPLRLITVVQEEALNLGKVKHLIFDEADKLFDKTFVEQTDDILSSCTDPHLRKTMFSATIPSNVEEIAQTIMNDPIRVIIGHKEAANINIDQQLVFCGNEEGKLIAIRQLVLEGEFKPPVIIFLESITRAKALFHELLYDKLNVDVIHAERTQVQRDKIIERFKSGDLWCLICTDVLARGVDFKGVNLVINYDVPRSAQAYVHRIGRTGRGGRSGKAITFYTKQDSLAIKPIINVMKQSGCEVSEWMQKISSMSKREKESLKKGKGHVERKQISTVPKVVKQKKRQRREMIEASKKRKLSVSDAEEEAGNDST.

The disordered stretch occupies residues 1-99 (MDIFRVLTRG…DHADDETELS (99 aa)). Residues 45-59 (ARDEQQLTKELDFFR) show a composition bias toward basic and acidic residues. Acidic residues predominate over residues 76–97 (GEDEVQEDNQEEDEDHADDETE). The short motif at 133–161 (DLITRFQFDKRLLNNLIENNFTEPTPIQS) is the Q motif element. The Helicase ATP-binding domain occupies 164–344 (IPILLHERDM…QTIMNDPIRV (181 aa)). 177–184 (APTGSGKT) provides a ligand contact to ATP. Residues 291 to 294 (DEAD) carry the DEAD box motif. The 163-residue stretch at 355 to 517 (NIDQQLVFCG…EVSEWMQKIS (163 aa)) folds into the Helicase C-terminal domain. Over residues 520 to 538 (SKREKESLKKGKGHVERKQ) the composition is skewed to basic and acidic residues. A disordered region spans residues 520 to 579 (SKREKESLKKGKGHVERKQISTVPKVVKQKKRQRREMIEASKKRKLSVSDAEEEAGNDST). Over residues 569-579 (DAEEEAGNDST) the composition is skewed to acidic residues.

It belongs to the DEAD box helicase family. DDX52/ROK1 subfamily. As to quaternary structure, interacts with the U3 snoRNA and is associated with the 90S and 40S pre-ribosomes.

It localises to the nucleus. The protein localises to the nucleolus. It carries out the reaction ATP + H2O = ADP + phosphate + H(+). ATP-dependent RNA helicase involved in 40S ribosomal subunit biogenesis. Required for the processing and cleavage of 35S pre-rRNA at sites A0, A1, and A2, leading to mature 18S rRNA. The polypeptide is ATP-dependent RNA helicase ROK1 (ROK1) (Kluyveromyces lactis (strain ATCC 8585 / CBS 2359 / DSM 70799 / NBRC 1267 / NRRL Y-1140 / WM37) (Yeast)).